The following is a 388-amino-acid chain: Translation initiation factor eIF2B subunit beta (388 aa).

A disordered region spans residues 109–133; that stretch reads DDFETTTSNNNNNNNNNNINSSSNI. The segment covering 116–133 has biased composition (low complexity); sequence SNNNNNNNNNNINSSSNI.

This sequence belongs to the eIF-2B alpha/beta/delta subunits family. In terms of assembly, component of the translation initiation factor 2B (eIF2B) complex which is a heterodecamer of two sets of five different subunits: alpha, beta, gamma, delta and epsilon. Subunits alpha, beta and delta comprise a regulatory subcomplex and subunits epsilon and gamma comprise a catalytic subcomplex. Within the complex, the hexameric regulatory complex resides at the center, with the two heterodimeric catalytic subcomplexes bound on opposite sides.

It is found in the cytoplasm. The protein resides in the cytosol. Acts as a component of the translation initiation factor 2B (eIF2B) complex, which catalyzes the exchange of GDP for GTP on eukaryotic initiation factor 2 (eIF2) gamma subunit. Its guanine nucleotide exchange factor activity is repressed when bound to eIF2 complex phosphorylated on the alpha subunit, thereby limiting the amount of methionyl-initiator methionine tRNA available to the ribosome and consequently global translation is repressed. The sequence is that of Translation initiation factor eIF2B subunit beta (eif2b2) from Dictyostelium discoideum (Social amoeba).